The primary structure comprises 838 residues: P protein (838 aa).

Over 1 to 179 (MHLEGRDGRR…KLRRCVQWLK (179 aa)) the chain is Cytoplasmic. Disordered stretches follow at residues 38 to 60 (LPRGAGGADPSHSCPRGAAGQSS) and 74 to 94 (KGRSHSSLPQMSSSRSKDSCF). A compositionally biased stretch (polar residues) spans 78 to 87 (HSSLPQMSSS). A helical transmembrane segment spans residues 180 to 197 (VMGLFAFVVLCSILFSLY). At 198–330 (PDQGKLWQLL…QYLRGSVETQ (133 aa)) the chain is on the extracellular side. N-linked (GlcNAc...) asparagine glycosylation is found at Asn214, Asn218, and Asn273. A helical transmembrane segment spans residues 331–347 (VTIATAILAGVYALIIF). Residues 348 to 353 (EIVHRT) lie on the Cytoplasmic side of the membrane. The chain crosses the membrane as a helical span at residues 354–370 (LAAMLGSLAALAALAVI). Residues 371 to 384 (GDRPSLTHVVEWID) are Extracellular-facing. A helical transmembrane segment spans residues 385-401 (FETLALLFGMMILVAIF). At 402 to 423 (SETGFFDYCAVKAYRLSRGRVW) the chain is on the cytoplasmic side. The helical transmembrane segment at 424–440 (AMIIMLCLIAAVLSAFL) threads the bilayer. Over 441–513 (DNVTTMLLFT…DFAGFTAHMF (73 aa)) the chain is Extracellular. An N-linked (GlcNAc...) asparagine glycan is attached at Asn442. The helical transmembrane segment at 514–530 (IGICLVLLVCFPLLRLL) threads the bilayer. The Cytoplasmic portion of the chain corresponds to 531–620 (YWNRKLYNKE…LQKKHRISDG (90 aa)). The helical transmembrane segment at 621 to 637 (ILLAKCLTVLGFVIFMF) threads the bilayer. Residues 638-647 (FLNSFVPGIH) lie on the Extracellular side of the membrane. A helical transmembrane segment spans residues 648–664 (LDLGWIAILGAIWLLIL). Residues 665–679 (ADIHDFEIILHRVEW) are Cytoplasmic-facing. The helical transmembrane segment at 680-696 (ATLLFFAALFVLMEALA) threads the bilayer. Residues 697-720 (HLHLIEYVGEQTALLIKMVPEEQR) lie on the Extracellular side of the membrane. A helical transmembrane segment spans residues 721-737 (LIAAIVLVVWVSALASS). Residues 738–760 (LIDNIPFTATMIPVLLNLSHDPE) lie on the Cytoplasmic side of the membrane. A helical transmembrane segment spans residues 761–777 (VGLPAPPLMYALAFGAC). Over 778-817 (LGGNGTLIGASANVVCAGIAEQHGYGFSFMEFFRLGFPMM) the chain is Extracellular. Residue Asn781 is glycosylated (N-linked (GlcNAc...) asparagine). The chain crosses the membrane as a helical span at residues 818–834 (VVSCTVGMCYLLVAHVV). Topologically, residues 835–838 (VGWN) are cytoplasmic.

Belongs to the CitM (TC 2.A.11) transporter family. In terms of tissue distribution, expressed in melanocytes and retinal pigment epithelium.

It localises to the melanosome membrane. It catalyses the reaction chloride(in) = chloride(out). Its function is as follows. Contributes to a melanosome-specific anion (chloride) current that modulates melanosomal pH for optimal tyrosinase activity required for melanogenesis and the melanosome maturation. One of the components of the mammalian pigmentary system. May serve as a key control point at which ethnic skin color variation is determined. Major determinant of brown and/or blue eye color. Seems to regulate the post-translational processing of tyrosinase, which catalyzes the limiting reaction in melanin synthesis. The chain is P protein from Homo sapiens (Human).